Reading from the N-terminus, the 533-residue chain is Homeobox protein DTH-1 (533 aa).

2 disordered regions span residues 1 to 28 and 308 to 378; these read MSSNGDSVKYDTNFDREGYSTDSSNECP and LPQN…GKKR. A compositionally biased stretch (basic and acidic residues) spans 8–19; sequence VKYDTNFDREGY. Residues 308-317 show a composition bias toward low complexity; it reads LPQNLPNPNQ. Residues 318–333 show a composition bias toward polar residues; it reads TDSIYSSSINENNQPI. Over residues 360–371 the composition is skewed to low complexity; the sequence is SVENNDNENSSS. The segment at residues 377–436 is a DNA-binding region (homeobox); the sequence is KRKRRVLFSKKQILELERHFRQKKYLSAPEREHLANLIGLSPTQVKIWFQNHRYKMKRAH.

The protein belongs to the NK-2 homeobox family. As to expression, intestine and unidentified peripheral parenchymal cells. Slightly higher levels in the cephalic region compared to other body regions.

The protein localises to the nucleus. In terms of biological role, this protein might be involved in determination and/or differentiation of nerve cells in the continuous replacement of neurons in the cephalic region. The sequence is that of Homeobox protein DTH-1 (DTH-1) from Girardia tigrina (Planarian).